A 362-amino-acid polypeptide reads, in one-letter code: Phospho-N-acetylmuramoyl-pentapeptide-transferase (362 aa).

Transmembrane regions (helical) follow at residues A28 to L48, G72 to W92, V100 to L120, V134 to T154, V170 to S190, G201 to V221, L241 to P261, V265 to A285, I290 to V310, and T339 to L359.

The protein belongs to the glycosyltransferase 4 family. MraY subfamily. Mg(2+) is required as a cofactor.

The protein resides in the cell inner membrane. The catalysed reaction is UDP-N-acetyl-alpha-D-muramoyl-L-alanyl-gamma-D-glutamyl-meso-2,6-diaminopimeloyl-D-alanyl-D-alanine + di-trans,octa-cis-undecaprenyl phosphate = di-trans,octa-cis-undecaprenyl diphospho-N-acetyl-alpha-D-muramoyl-L-alanyl-D-glutamyl-meso-2,6-diaminopimeloyl-D-alanyl-D-alanine + UMP. It participates in cell wall biogenesis; peptidoglycan biosynthesis. Functionally, catalyzes the initial step of the lipid cycle reactions in the biosynthesis of the cell wall peptidoglycan: transfers peptidoglycan precursor phospho-MurNAc-pentapeptide from UDP-MurNAc-pentapeptide onto the lipid carrier undecaprenyl phosphate, yielding undecaprenyl-pyrophosphoryl-MurNAc-pentapeptide, known as lipid I. This chain is Phospho-N-acetylmuramoyl-pentapeptide-transferase, found in Granulibacter bethesdensis (strain ATCC BAA-1260 / CGDNIH1).